The following is a 775-amino-acid chain: Melanoma-associated antigen D1 (775 aa).

The disordered stretch occupies residues 37–330 (SEAPPTSQAT…PARQTPSAWQ (294 aa)). Over residues 39–50 (APPTSQATAAAS) the composition is skewed to low complexity. Composition is skewed to polar residues over residues 52 to 63 (PNASPQSSQPPT), 84 to 100 (KAQN…SQAR), 150 to 180 (GQNT…NQPK), 223 to 237 (AQTS…NVES), 250 to 260 (NNLNVEENSNG), and 297 to 330 (LAWQ…SAWQ). Tandem repeats lie at residues 293-298 (WQTPLA), 299-304 (WQNPSG), 305-310 (WQNQTA), 329-334 (WQNPVA), 335-340 (WQNPVI), 341-346 (WPNPVI), 347-352 (WQNPVI), 353-358 (WPNPIV), 359-364 (WPGPIV), 365-370 (WPNPMA), 371-376 (WQSTPG), 377-382 (WQSPPS), 383-388 (WQAPPS), 389-394 (WQSPQD), 395-400 (WQGPPD), 401-406 (WQLPPD), 407-412 (WSMPPD), 413-418 (WSFPSD), and 419-424 (WPFPPD). The tract at residues 293 to 441 (WQTPLAWQNP…IPPDWQNLRP (149 aa)) is 22 X 6 AA tandem repeats of W-[PQ]-X-P-X-X. The tract at residues 374–407 (TPGWQSPPSWQAPPSWQSPQDWQGPPDWQLPPDW) is disordered. Over residues 375 to 406 (PGWQSPPSWQAPPSWQSPQDWQGPPDWQLPPD) the composition is skewed to low complexity. One copy of the 20; approximate repeat lies at 425 to 429 (WIPAD). A run of 2 repeats spans residues 430 to 435 (WPIPPD) and 436 to 441 (WQNLRP). Residues 437-452 (QNLRPSPNLRSSPNSR) show a composition bias toward low complexity. A disordered region spans residues 437–463 (QNLRPSPNLRSSPNSRASQNQGPPQPR). The MAGE domain maps to 468–666 (LQERANKLVK…RDWTAQFMEA (199 aa)).

As to quaternary structure, interacts with DLX5, DLX7 and MSX2 and forms homomultimers. Interacts with UNC5A. Interacts with TRIM28 and PJA1. Interacts with NGFR/p75NTR and RORA. Ubiquitous and in the seminiferous tubules expressed in Sertoli cells but not in germ cells. Expression decreases in all tissues with increased age and is detectable only in brain cortex and lung.

It localises to the cytoplasm. The protein resides in the cell membrane. It is found in the nucleus. Involved in the apoptotic response after nerve growth factor (NGF) binding in neuronal cells. Inhibits cell cycle progression, and facilitates NGFR-mediated apoptosis. May act as a regulator of the function of DLX family members. May enhance ubiquitin ligase activity of RING-type zinc finger-containing E3 ubiquitin-protein ligases. Proposed to act through recruitment and/or stabilization of the Ubl-conjugating enzyme (E2) at the E3:substrate complex. Plays a role in the circadian rhythm regulation. May act as RORA co-regulator, modulating the expression of core clock genes such as BMAL1 and NFIL3, induced, or NR1D1, repressed. This Rattus norvegicus (Rat) protein is Melanoma-associated antigen D1 (Maged1).